A 660-amino-acid polypeptide reads, in one-letter code: Acetyl-coenzyme A synthetase (660 aa).

CoA contacts are provided by residues 197 to 200 (RGGK) and T317. Residues 397–399 (GEP), 421–426 (DTWWQT), D512, and R528 each bind ATP. S536 serves as a coordination point for CoA. R539 is a binding site for ATP. V550, H552, and V555 together coordinate Mg(2+). Position 625 is an N6-acetyllysine (K625).

It belongs to the ATP-dependent AMP-binding enzyme family. The cofactor is Mg(2+). Post-translationally, acetylated. Deacetylation by the SIR2-homolog deacetylase activates the enzyme.

It catalyses the reaction acetate + ATP + CoA = acetyl-CoA + AMP + diphosphate. Catalyzes the conversion of acetate into acetyl-CoA (AcCoA), an essential intermediate at the junction of anabolic and catabolic pathways. AcsA undergoes a two-step reaction. In the first half reaction, AcsA combines acetate with ATP to form acetyl-adenylate (AcAMP) intermediate. In the second half reaction, it can then transfer the acetyl group from AcAMP to the sulfhydryl group of CoA, forming the product AcCoA. The chain is Acetyl-coenzyme A synthetase from Burkholderia lata (strain ATCC 17760 / DSM 23089 / LMG 22485 / NCIMB 9086 / R18194 / 383).